Consider the following 188-residue polypeptide: Large ribosomal subunit protein bL35m (188 aa).

This sequence belongs to the bacterial ribosomal protein bL35 family. Component of the mitochondrial large ribosomal subunit (mt-LSU). Mature mammalian 55S mitochondrial ribosomes consist of a small (28S) and a large (39S) subunit. The 28S small subunit contains a 12S ribosomal RNA (12S mt-rRNA) and 30 different proteins. The 39S large subunit contains a 16S rRNA (16S mt-rRNA), a copy of mitochondrial valine transfer RNA (mt-tRNA(Val)), which plays an integral structural role, and 52 different proteins.

The protein resides in the mitochondrion. The polypeptide is Large ribosomal subunit protein bL35m (MRPL35) (Homo sapiens (Human)).